The chain runs to 85 residues: Putative defensin-like protein 79 (85 aa).

A signal peptide spans Met-1–Ser-31. Cystine bridges form between Cys-37–Cys-69, Cys-44–Cys-60, Cys-47–Cys-67, and Cys-51–Cys-68.

This sequence belongs to the DEFL family.

The protein resides in the secreted. The sequence is that of Putative defensin-like protein 79 from Arabidopsis thaliana (Mouse-ear cress).